Here is a 93-residue protein sequence, read N- to C-terminus: Acyl carrier protein AcpXL (93 aa).

Residues 2–88 (SSTFDKVADI…NLCAKIDELV (87 aa)) enclose the Carrier domain. O-(pantetheine 4'-phosphoryl)serine is present on Ser-37.

In terms of processing, 4'-phosphopantetheine is transferred from CoA to a specific serine of apo-ACP by AcpS. This modification is essential for activity because fatty acids are bound in thioester linkage to the sulfhydryl of the prosthetic group.

The protein localises to the cytoplasm. It participates in glycolipid biosynthesis; KDO(2)-lipid A biosynthesis. Carrier of the growing fatty acid chain in fatty acid biosynthesis. Is involved in the transfer of long hydroxylated fatty acids to lipid A. This chain is Acyl carrier protein AcpXL (acpXL), found in Brucella melitensis biotype 1 (strain ATCC 23456 / CCUG 17765 / NCTC 10094 / 16M).